The primary structure comprises 191 residues: Recombination protein RecR (191 aa).

The C4-type zinc-finger motif lies at 56 to 71 (CQNCNFLQSNNICHFC). One can recognise a Toprim domain in the interval 78-170 (KQLMIFETTS…KVTKLAQGLP (93 aa)).

This sequence belongs to the RecR family.

Its function is as follows. May play a role in DNA repair. It seems to be involved in an RecBC-independent recombinational process of DNA repair. It may act with RecF and RecO. The polypeptide is Recombination protein RecR (Mycoplasmopsis pulmonis (strain UAB CTIP) (Mycoplasma pulmonis)).